Here is a 200-residue protein sequence, read N- to C-terminus: MESQARVKFYCDEARCIDCHGCDVACKEAHHLPVGVNRRRVVTLNEGLVGKEKSLSIACMHCSDAPCAQVCPVDCFYVRADGIVLHDKEKCIGCGYCLYACPFGAPQFPKSGIFGSRGPMDKCTFCAGGPEETHSEKEYKLYGQNRIAEGKVPVCAAMCSTKALLAGDSDSISLIIRERVLKRGSGTASVPYTWSQAYKD.

4Fe-4S ferredoxin-type domains lie at 7 to 37, 50 to 81, and 82 to 111; these read VKFY…VGVN, GKEK…VRAD, and GIVL…FPKS. Residues Cys16, Cys19, Cys22, Cys26, Cys59, Cys62, Cys67, Cys71, Cys91, Cys94, Cys97, Cys101, Cys123, Cys126, Cys155, and Cys159 each contribute to the [4Fe-4S] cluster site.

Formate dehydrogenase is a membrane-bound complex, formed of at least three different subunits. The cofactor is [4Fe-4S] cluster.

This chain is an electron transfer unit containing 18 cysteine residues, 16 of which occur in four clusters. The polypeptide is Formate dehydrogenase iron-sulfur subunit (fdhB1) (Wolinella succinogenes (strain ATCC 29543 / DSM 1740 / CCUG 13145 / JCM 31913 / LMG 7466 / NCTC 11488 / FDC 602W) (Vibrio succinogenes)).